The sequence spans 374 residues: C-X-C chemokine receptor type 5 (374 aa).

Residues 1–57 (MNYPLTLDMGSITYNMDDLYKELAFYSNSTEIPLQDSNFCSTVEGPLLTSFKAVFMP) are Extracellular-facing. N28 carries an N-linked (GlcNAc...) asparagine glycan. A helical transmembrane segment spans residues 58 to 78 (VAYSLIFLLGMMGNILVLVIL). The Cytoplasmic segment spans residues 79–90 (ERHRHTRSSTET). Residues 91–111 (FLFHLAVADLLLVFILPFAVA) form a helical membrane-spanning segment. Topologically, residues 112–126 (EGSVGWVLGTFLCKT) are extracellular. An intrachain disulfide couples C124 to C204. A helical membrane pass occupies residues 127-147 (VIALHKINFYCSSLLLACIAV). The Cytoplasmic portion of the chain corresponds to 148-169 (DRYLAIVHAVHAYRRRRLLSIH). The helical transmembrane segment at 170-190 (ITCTAIWLAGFLFALPELLFA) threads the bilayer. Residues 191–221 (KVGQPHNNDSLPQCTFSQENEAETRAWFTSR) are Extracellular-facing. N-linked (GlcNAc...) asparagine glycosylation occurs at N198. The helical transmembrane segment at 222–242 (FLYHIGGFLLPMLVMGWCYVG) threads the bilayer. Residues 243 to 261 (VVHRLLQAQRRPQRQKAVR) lie on the Cytoplasmic side of the membrane. The helical transmembrane segment at 262 to 282 (VAILVTSIFFLCWSPYHIVIF) threads the bilayer. At 283 to 306 (LDTLERLKAVNSSCELSGYLSVAI) the chain is on the extracellular side. The helical transmembrane segment at 307-327 (TLCEFLGLAHCCLNPMLYTFA) threads the bilayer. Over 328–374 (GVKFRSDLSRLLTKLGCAGPASLCQLFPNWRKSSLSESENATSLTTF) the chain is Cytoplasmic.

It belongs to the G-protein coupled receptor 1 family. Mainly in spleen, in resting B-cells.

The protein resides in the cell membrane. Functionally, cytokine receptor that binds to B-lymphocyte chemoattractant (BLC). Involved in B-cell migration into B-cell follicles of spleen and Peyer patches but not into those of mesenteric or peripheral lymph nodes. This is C-X-C chemokine receptor type 5 (Cxcr5) from Mus musculus (Mouse).